A 614-amino-acid chain; its full sequence is Probable LRR receptor-like serine/threonine-protein kinase At5g63710 (614 aa).

An N-terminal signal peptide occupies residues 1-50 (MAHSGNGESFHDPLRGFIQRNCFRWNNQKLILQCFMALAFVGITSSTTQP). The Extracellular portion of the chain corresponds to 51–224 (DIEGGALLQL…VTSSKKKLRD (174 aa)). 4 N-linked (GlcNAc...) asparagine glycosylation sites follow: Asn-65, Asn-125, Asn-146, and Asn-175. LRR repeat units lie at residues 115–139 (LKFL…LGNM), 141–163 (NLQT…WSQL), and 164–187 (SNLK…FFSI). Residues 225–245 (ITLTASCVASIILFLGAMVMY) traverse the membrane as a helical segment. The Cytoplasmic segment spans residues 246–613 (HHHRVRRTKY…DQESIRLSTA (368 aa)). Thr-286 carries the post-translational modification Phosphothreonine. The Protein kinase domain occupies 289–573 (FNESNLIGQG…GTGGLAEKWT (285 aa)). Position 295-303 (295-303 (IGQGGFGKV)) interacts with ATP. Thr-312 carries the phosphothreonine modification. An ATP-binding site is contributed by Lys-317. Ser-370 is modified (phosphoserine). Thr-389 carries the post-translational modification Phosphothreonine. Asp-416 acts as the Proton acceptor in catalysis. Phosphothreonine occurs at positions 449, 450, and 455. Tyr-463 bears the Phosphotyrosine mark. Position 466 is a phosphothreonine (Thr-466). Ser-470 is subject to Phosphoserine. The residue at position 545 (Thr-545) is a Phosphothreonine.

This sequence belongs to the protein kinase superfamily. Ser/Thr protein kinase family.

It localises to the cell membrane. The enzyme catalyses L-seryl-[protein] + ATP = O-phospho-L-seryl-[protein] + ADP + H(+). The catalysed reaction is L-threonyl-[protein] + ATP = O-phospho-L-threonyl-[protein] + ADP + H(+). In Arabidopsis thaliana (Mouse-ear cress), this protein is Probable LRR receptor-like serine/threonine-protein kinase At5g63710.